We begin with the raw amino-acid sequence, 454 residues long: NADP-specific glutamate dehydrogenase 1 (454 aa).

N-acetylserine is present on S2. The active site involves K110. 174-203 (GVLTGKGLNWGGSLIRPEATGYGLVYYTQA) contacts NAD(+). Residues K325, K371, and K433 each participate in a glycyl lysine isopeptide (Lys-Gly) (interchain with G-Cter in ubiquitin) cross-link.

This sequence belongs to the Glu/Leu/Phe/Val dehydrogenases family. Homohexamer.

The catalysed reaction is L-glutamate + NADP(+) + H2O = 2-oxoglutarate + NH4(+) + NADPH + H(+). Functionally, catalyzes the incorporation of an ammonium ion into alpha-ketoglutarate to form L-glutamate, the major route of assimilation of ammonia into an organic form in yeast. This chain is NADP-specific glutamate dehydrogenase 1, found in Saccharomyces cerevisiae (strain ATCC 204508 / S288c) (Baker's yeast).